The following is a 426-amino-acid chain: MLGALFLGTAANAAVQSIDRVVAIVDNDVVMQSQLDQRVHEVQQTIAKRGGGLPPPGVLDQQVLERLIVENLQLQIGERSGIRITDEELNQAVGTIAQRNNMTPEQFRIALSRDGLSYEDAREQIRREMVISRVRQRRVAERIQVSEQEVKNFLASDLGKMQLSEELHLANILIPTPESANSEAIQSAARKAMEVYQQLKQGADFGQMAVANSASDNALEGGDMGWRKAAQLPPPFDRELSSMATGDITQPARTPGGFIILKLLEKRGGESQMRDEVHVRHILVKPSPVRDEAKTKELAQSLYNRIEAGEDFAELAKKYSEDPGSALNGGDLNWIDPNALVPEFRAVMAKSPQGQLSKPFQTQYGWHVLEVLGRRATDSTEQAREQQAMTVLRNRKYDEELQTWLRQIRDEAYVEIKLPGADQAAQ.

An N-terminal signal peptide occupies residues 1-13 (MLGALFLGTAANA). PpiC domains follow at residues 164-265 (SEEL…KLLE) and 274-373 (RDEV…EVLG).

The protein localises to the periplasm. It catalyses the reaction [protein]-peptidylproline (omega=180) = [protein]-peptidylproline (omega=0). Chaperone involved in the correct folding and assembly of outer membrane proteins. Recognizes specific patterns of aromatic residues and the orientation of their side chains, which are found more frequently in integral outer membrane proteins. May act in both early periplasmic and late outer membrane-associated steps of protein maturation. This Pseudomonas fluorescens (strain Pf0-1) protein is Chaperone SurA.